The sequence spans 41 residues: Large ribosomal subunit protein bL36 (41 aa).

The protein belongs to the bacterial ribosomal protein bL36 family.

The sequence is that of Large ribosomal subunit protein bL36 from Gluconacetobacter diazotrophicus (strain ATCC 49037 / DSM 5601 / CCUG 37298 / CIP 103539 / LMG 7603 / PAl5).